A 30-amino-acid chain; its full sequence is Cliotide T19 (30 aa).

The cyclopeptide (Gly-Asn) cross-link spans Gly1 to Asn30. Disulfide bonds link Cys6–Cys20, Cys10–Cys22, and Cys15–Cys27.

Post-translationally, contains 3 disulfide bonds. This is a cyclic peptide. In terms of tissue distribution, expressed in root nodules but not in seed.

In terms of biological role, probably participates in a plant defense mechanism. Active against Gram-negative bacterium E.coli ATCC 700926 (MIC=0.6 uM) under low-salt conditions. Not active against Gram-positive bacterium S.aureus ATCC 12600 up to a concentration of 100 uM under low-salt conditions. Exhibits immunomodulatory activity but no cytotoxicity in vitro. The sequence is that of Cliotide T19 from Clitoria ternatea (Butterfly pea).